We begin with the raw amino-acid sequence, 262 residues long: Leucine-rich repeat-containing protein 18 (262 aa).

LRR repeat units lie at residues 28–49 (GRKR…ILRL), 51–72 (DIDE…IAKF), 74–95 (NLRW…IGQM), 97–118 (SLLF…VELN), 122–144 (NIRT…GALK), 145–167 (ELHE…AKLP), and 168–189 (KLKK…EMFV).

As to expression, exclusively expressed in spermatocytes and roud spermatids within seminiferous tubules during spermatogenesis.

It is found in the cytoplasm. In terms of biological role, may be involved in the regulation of spermatogenesis and sperm maturation. The protein is Leucine-rich repeat-containing protein 18 (Lrrc18) of Mus musculus (Mouse).